Reading from the N-terminus, the 469-residue chain is 3-isopropylmalate dehydratase large subunit (469 aa).

Cysteine 350, cysteine 410, and cysteine 413 together coordinate [4Fe-4S] cluster.

This sequence belongs to the aconitase/IPM isomerase family. LeuC type 1 subfamily. In terms of assembly, heterodimer of LeuC and LeuD. [4Fe-4S] cluster is required as a cofactor.

The enzyme catalyses (2R,3S)-3-isopropylmalate = (2S)-2-isopropylmalate. It functions in the pathway amino-acid biosynthesis; L-leucine biosynthesis; L-leucine from 3-methyl-2-oxobutanoate: step 2/4. Catalyzes the isomerization between 2-isopropylmalate and 3-isopropylmalate, via the formation of 2-isopropylmaleate. In Brucella melitensis biotype 2 (strain ATCC 23457), this protein is 3-isopropylmalate dehydratase large subunit.